A 258-amino-acid polypeptide reads, in one-letter code: Type III pantothenate kinase 1 (258 aa).

Position 6-13 (6-13 (DMGNSHIH)) interacts with ATP. Residue 107 to 110 (GADR) participates in substrate binding. Catalysis depends on Asp-109, which acts as the Proton acceptor. Position 130 (Asp-130) interacts with K(+). Thr-133 contributes to the ATP binding site. Thr-185 contributes to the substrate binding site.

It belongs to the type III pantothenate kinase family. As to quaternary structure, homodimer. The cofactor is NH4(+). K(+) is required as a cofactor.

It localises to the cytoplasm. The catalysed reaction is (R)-pantothenate + ATP = (R)-4'-phosphopantothenate + ADP + H(+). It participates in cofactor biosynthesis; coenzyme A biosynthesis; CoA from (R)-pantothenate: step 1/5. Functionally, catalyzes the phosphorylation of pantothenate (Pan), the first step in CoA biosynthesis. The chain is Type III pantothenate kinase 1 from Francisella tularensis subsp. tularensis (strain FSC 198).